The sequence spans 341 residues: Serine/threonine-protein kinase-like protein At5g23170 (341 aa).

Residues 16–298 form the Protein kinase domain; that stretch reads FSPSKLIGKG…FGEITAEIVA (283 aa). ATP-binding positions include 22 to 30 and Lys51; that span reads IGKGSHGYV. Positions 52 to 75 are disordered; sequence TPSSLSPSSPSSSSSSKSEQTKKL. Positions 53–69 are enriched in low complexity; sequence PSSLSPSSPSSSSSSKS. Asp153 functions as the Proton acceptor in the catalytic mechanism. Residues 311–332 are a coiled coil; it reads MSVLRRVVKLKRRKKRLRETLT.

The protein belongs to the protein kinase superfamily. Ser/Thr protein kinase family. As to expression, ubiquitous. Higher expression in mature stamina and pollen.

The catalysed reaction is L-seryl-[protein] + ATP = O-phospho-L-seryl-[protein] + ADP + H(+). It catalyses the reaction L-threonyl-[protein] + ATP = O-phospho-L-threonyl-[protein] + ADP + H(+). The polypeptide is Serine/threonine-protein kinase-like protein At5g23170 (Arabidopsis thaliana (Mouse-ear cress)).